We begin with the raw amino-acid sequence, 209 residues long: LexA repressor (209 aa).

Residues 30–50 (RVEIAREIGFKSPNAAEEHLK) constitute a DNA-binding region (H-T-H motif). Residues S126 and K163 each act as for autocatalytic cleavage activity in the active site.

This sequence belongs to the peptidase S24 family. Homodimer.

The catalysed reaction is Hydrolysis of Ala-|-Gly bond in repressor LexA.. Its function is as follows. Represses a number of genes involved in the response to DNA damage (SOS response), including recA and lexA. In the presence of single-stranded DNA, RecA interacts with LexA causing an autocatalytic cleavage which disrupts the DNA-binding part of LexA, leading to derepression of the SOS regulon and eventually DNA repair. This chain is LexA repressor, found in Glaesserella parasuis serovar 5 (strain SH0165) (Haemophilus parasuis).